A 66-amino-acid polypeptide reads, in one-letter code: Gallinacin-8 (66 aa).

The signal sequence occupies residues 1 to 19; it reads MKILYLLLAVLLTVLQSSL. Residues 20–25 constitute a propeptide that is removed on maturation; sequence GFMRVP. Cystine bridges form between Cys31/Cys60, Cys38/Cys54, and Cys43/Cys61.

The protein belongs to the beta-defensin family. Expressed in the liver, kidney, gall bladder, testis, ovary and male and femae reproductive tracts. Expressed in the ovarian stroma and the theca and granulosa layers of the ovarian follicle.

Its subcellular location is the secreted. The protein localises to the cytoplasmic granule. In terms of biological role, has bactericidal activity. In Gallus gallus (Chicken), this protein is Gallinacin-8 (GAL8).